The sequence spans 930 residues: Isoleucine--tRNA ligase (930 aa).

The short motif at 57 to 67 (PYANGNIHVGH) is the 'HIGH' region element. Glu554 serves as a coordination point for L-isoleucyl-5'-AMP. Positions 595 to 599 (KMSKS) match the 'KMSKS' region motif. Residue Lys598 coordinates ATP. Zn(2+) contacts are provided by Cys888, Cys891, Cys908, and Cys911.

Belongs to the class-I aminoacyl-tRNA synthetase family. IleS type 1 subfamily. Monomer. The cofactor is Zn(2+).

It is found in the cytoplasm. It catalyses the reaction tRNA(Ile) + L-isoleucine + ATP = L-isoleucyl-tRNA(Ile) + AMP + diphosphate. Catalyzes the attachment of isoleucine to tRNA(Ile). As IleRS can inadvertently accommodate and process structurally similar amino acids such as valine, to avoid such errors it has two additional distinct tRNA(Ile)-dependent editing activities. One activity is designated as 'pretransfer' editing and involves the hydrolysis of activated Val-AMP. The other activity is designated 'posttransfer' editing and involves deacylation of mischarged Val-tRNA(Ile). This chain is Isoleucine--tRNA ligase, found in Streptococcus pneumoniae (strain CGSP14).